The chain runs to 341 residues: Anthranilate phosphoribosyltransferase (341 aa).

5-phospho-alpha-D-ribose 1-diphosphate-binding positions include glycine 79, 82-83, threonine 87, 89-92, 107-115, and alanine 119; these read GD, NIST, and KHGNRAASS. Residue glycine 79 coordinates anthranilate. A Mg(2+)-binding site is contributed by serine 91. Anthranilate is bound at residue asparagine 110. Arginine 165 lines the anthranilate pocket. 2 residues coordinate Mg(2+): aspartate 224 and glutamate 225.

This sequence belongs to the anthranilate phosphoribosyltransferase family. In terms of assembly, homodimer. The cofactor is Mg(2+).

The enzyme catalyses N-(5-phospho-beta-D-ribosyl)anthranilate + diphosphate = 5-phospho-alpha-D-ribose 1-diphosphate + anthranilate. It functions in the pathway amino-acid biosynthesis; L-tryptophan biosynthesis; L-tryptophan from chorismate: step 2/5. In terms of biological role, catalyzes the transfer of the phosphoribosyl group of 5-phosphorylribose-1-pyrophosphate (PRPP) to anthranilate to yield N-(5'-phosphoribosyl)-anthranilate (PRA). The protein is Anthranilate phosphoribosyltransferase of Lacticaseibacillus paracasei (strain ATCC 334 / BCRC 17002 / CCUG 31169 / CIP 107868 / KCTC 3260 / NRRL B-441) (Lactobacillus paracasei).